The following is a 313-amino-acid chain: Olfactory receptor 10Z1 (313 aa).

The Extracellular portion of the chain corresponds to 1–25 (MGQTNVTSWRDFVFLGFSSSGELQL). The N-linked (GlcNAc...) asparagine glycan is linked to Asn5. Residues 26-46 (LLFALFLSLYLVTLTSNVFII) form a helical membrane-spanning segment. At 47–54 (IAIRLDSH) the chain is on the cytoplasmic side. The helical transmembrane segment at 55–75 (LHTPMYLFLSFLSFSETCYTL) threads the bilayer. Over 76–99 (GIIPRMLSGLAGGDQAISYVGCAA) the chain is Extracellular. Cys97 and Cys189 are disulfide-bonded. Residues 100-120 (QMFFSASWACTNCFLLAAMGF) form a helical membrane-spanning segment. Over 121–139 (DRYVAICAPLHYASHMNPT) the chain is Cytoplasmic. A helical transmembrane segment spans residues 140-160 (LCAQLVITSFLTGYLFGLGMT). The Extracellular portion of the chain corresponds to 161-197 (LVIFHLSFCSSHEIQHFFCDTPPVLSLACGDTGPSEL). The helical transmembrane segment at 198–217 (RIFILSLLVLLVSFFFITIS) threads the bilayer. At 218–237 (YAYILAAILRIPSAEGQKKA) the chain is on the cytoplasmic side. Residues 238–258 (FSTCASHLTVVIIHYGCASFV) traverse the membrane as a helical segment. Residues 259 to 271 (YLRPKASYSLERD) lie on the Extracellular side of the membrane. The chain crosses the membrane as a helical span at residues 272-292 (QLIAMTYTVVTPLLNPIVYSL). At 293–313 (RNRAIQTALRNAFRGRLLGKG) the chain is on the cytoplasmic side.

The protein belongs to the G-protein coupled receptor 1 family.

Its subcellular location is the cell membrane. Its function is as follows. Odorant receptor. This chain is Olfactory receptor 10Z1 (OR10Z1), found in Homo sapiens (Human).